We begin with the raw amino-acid sequence, 357 residues long: 3-isopropylmalate dehydrogenase (357 aa).

Positions 97, 107, 135, and 224 each coordinate substrate. Mg(2+)-binding residues include D224, D248, and D252. 282–294 (GSAPDIAGQDKAN) lines the NAD(+) pocket.

This sequence belongs to the isocitrate and isopropylmalate dehydrogenases family. LeuB type 1 subfamily. Homodimer. Mg(2+) serves as cofactor. Requires Mn(2+) as cofactor.

The protein resides in the cytoplasm. The catalysed reaction is (2R,3S)-3-isopropylmalate + NAD(+) = 4-methyl-2-oxopentanoate + CO2 + NADH. The protein operates within amino-acid biosynthesis; L-leucine biosynthesis; L-leucine from 3-methyl-2-oxobutanoate: step 3/4. Catalyzes the oxidation of 3-carboxy-2-hydroxy-4-methylpentanoate (3-isopropylmalate) to 3-carboxy-4-methyl-2-oxopentanoate. The product decarboxylates to 4-methyl-2 oxopentanoate. The polypeptide is 3-isopropylmalate dehydrogenase (Synechococcus sp. (strain CC9605)).